The sequence spans 327 residues: Methionine import ATP-binding protein MetN (327 aa).

One can recognise an ABC transporter domain in the interval 3 to 239 (VELKNIEKIY…PKHAVTKELI (237 aa)). 36-43 (GYSGAGKS) serves as a coordination point for ATP.

Belongs to the ABC transporter superfamily. Methionine importer (TC 3.A.1.24) family. In terms of assembly, the complex is composed of two ATP-binding proteins (MetN), two transmembrane proteins (MetI) and a solute-binding protein (MetQ).

Its subcellular location is the cell inner membrane. The enzyme catalyses L-methionine(out) + ATP + H2O = L-methionine(in) + ADP + phosphate + H(+). It catalyses the reaction D-methionine(out) + ATP + H2O = D-methionine(in) + ADP + phosphate + H(+). Part of the ABC transporter complex MetNIQ involved in methionine import. Responsible for energy coupling to the transport system. The protein is Methionine import ATP-binding protein MetN of Helicobacter acinonychis (strain Sheeba).